The following is a 395-amino-acid chain: MDLKDNSFAKKRSTVFVVLLIVFCFFLMFSAFADGFNFWSPWSTDFNSRVIHIKSDGNIETTSIVSHELHPDFKAVRFAFGLVIVLFISVIAVLMNWELSNSIFKNYEKLNLSLSLLSGIMVSGGMIPTFFVIYFREWNATVNWIWTASFAGMIVFLWAVYMISTSFIKIRPSLQVIYSLGAVICFIACIGTIYFSVIRGWTTIFLLIAIGVCTDTFAYLFGKRFGKNPLIKISPSKTWEGAFFGVTGTVLTISIICVLYSIPNYVRQPSIKDASKTALQTPQNYDVHNLITNVFLISFISGGSTFYIYWWVSTLALIFTASIFAIGGDLFFSYIKRLTKIKDFSKLLGKHGGILDRFDSSSFLISFFFIYHVIAGISSNQRLLMEPNTYFSAVS.

Transmembrane regions (helical) follow at residues 13-33 (STVF…SAFA), 78-98 (FAFG…MNWE), 115-135 (SLLS…VIYF), 144-164 (WIWT…YMIS), 177-197 (IYSL…YFSV), 201-221 (WTTI…AYLF), 242-262 (AFFG…LYSI), 306-326 (FYIY…IFAI), and 358-378 (FDSS…AGIS).

Belongs to the CDS family.

The protein resides in the cell membrane. The enzyme catalyses a 1,2-diacyl-sn-glycero-3-phosphate + CTP + H(+) = a CDP-1,2-diacyl-sn-glycerol + diphosphate. Its pathway is phospholipid metabolism; CDP-diacylglycerol biosynthesis; CDP-diacylglycerol from sn-glycerol 3-phosphate: step 3/3. The polypeptide is Putative phosphatidate cytidylyltransferase (cdsA) (Mycoplasma pneumoniae (strain ATCC 29342 / M129 / Subtype 1) (Mycoplasmoides pneumoniae)).